Reading from the N-terminus, the 148-residue chain is Leghemoglobin 2 (148 aa).

One can recognise a Globin domain in the interval 2 to 148 (GFTEKQEALV…LSAAIKKAMS (147 aa)). The residue at position 30 (tyrosine 30) is a Nitrated tyrosine. A heme b-binding site is contributed by serine 45. The residue at position 45 (serine 45) is a Phosphoserine. Position 63 (histidine 63) interacts with O2. Heme b is bound by residues lysine 66, histidine 95, and lysine 98. Tyrosine 136 is modified (nitrated tyrosine).

It belongs to the plant globin family. In terms of assembly, monomer. In terms of processing, nitrated in effective nodules and particularly in hypoxic conditions; this mechanism may play a protective role in the symbiosis by buffering toxic peroxynitrite NO(2)(-). Nitration level decrease during nodule senescence. Phosphorylation at Ser-45 disrupts the molecular environment of its porphyrin ring oxygen binding pocket, thus leading to a reduced oxygen consumption and to the delivery of oxygen O(2) to symbiosomes. In terms of tissue distribution, stem nodules.

It is found in the cytoplasm. The protein localises to the cytosol. The protein resides in the nucleus. In terms of biological role, leghemoglobin that reversibly binds oxygen O(2) through a pentacoordinated heme iron. In stem nodules, facilitates the diffusion of oxygen to the bacteroids while preventing the bacterial nitrogenase from being inactivated by buffering dioxygen, nitric oxide and carbon monoxide, and promoting the formation of reactive oxygen species (ROS, e.g. H(2)O(2)). This role is essential for symbiotic nitrogen fixation (SNF). In Sesbania rostrata, this protein is Leghemoglobin 2.